The primary structure comprises 458 residues: RuvB-like protein 1 (458 aa).

73–80 (GPPGTGKT) contacts ATP.

Belongs to the RuvB family. As to quaternary structure, interacts with FRI, and with FLX and FES1, two component of the transcription activator complex FRI-C. Interacts with the disease resistance genes RPM1 and RPP5.

The protein resides in the nucleus. It carries out the reaction ATP + H2O = ADP + phosphate + H(+). Its function is as follows. Proposed core component of the chromatin remodeling INO80 complex which is involved in transcriptional regulation, DNA replication and probably DNA repair. Component of the NuA4 histone acetyltransferase complex which is involved in transcriptional activation of select genes principally by acetylation of nucleosomal histones H4 and H2A. Has single-stranded DNA-stimulated ATPase and ATP-dependent DNA helicase (3' to 5') activity suggesting a role in nuclear processes such as recombination and transcription. This chain is RuvB-like protein 1 (RIN1), found in Arabidopsis thaliana (Mouse-ear cress).